The following is a 371-amino-acid chain: tRNA-specific 2-thiouridylase MnmA (371 aa).

Residues 13 to 20 and Met39 contribute to the ATP site; that span reads GMSGGVDS. Residues 99-101 form an interaction with target base in tRNA region; it reads NPD. Cys104 serves as the catalytic Nucleophile. Cysteines 104 and 200 form a disulfide. Residue Gly128 coordinates ATP. Positions 150-152 are interaction with tRNA; that stretch reads KDQ. Cys200 (cysteine persulfide intermediate) is an active-site residue. Residues 308–309 are interaction with tRNA; sequence RY.

The protein belongs to the MnmA/TRMU family.

The protein resides in the cytoplasm. It carries out the reaction S-sulfanyl-L-cysteinyl-[protein] + uridine(34) in tRNA + AH2 + ATP = 2-thiouridine(34) in tRNA + L-cysteinyl-[protein] + A + AMP + diphosphate + H(+). Functionally, catalyzes the 2-thiolation of uridine at the wobble position (U34) of tRNA, leading to the formation of s(2)U34. This Bacillus cereus (strain ATCC 14579 / DSM 31 / CCUG 7414 / JCM 2152 / NBRC 15305 / NCIMB 9373 / NCTC 2599 / NRRL B-3711) protein is tRNA-specific 2-thiouridylase MnmA.